Consider the following 145-residue polypeptide: Large ribosomal subunit protein uL16 (145 aa).

This sequence belongs to the universal ribosomal protein uL16 family. Part of the 50S ribosomal subunit.

Its function is as follows. Binds 23S rRNA and is also seen to make contacts with the A and possibly P site tRNAs. This Agathobacter rectalis (strain ATCC 33656 / DSM 3377 / JCM 17463 / KCTC 5835 / VPI 0990) (Eubacterium rectale) protein is Large ribosomal subunit protein uL16.